The chain runs to 114 residues: Iron-sulfur cluster insertion protein ErpA (114 aa).

Iron-sulfur cluster contacts are provided by cysteine 42, cysteine 106, and cysteine 108.

The protein belongs to the HesB/IscA family. Homodimer. Iron-sulfur cluster serves as cofactor.

Functionally, required for insertion of 4Fe-4S clusters for at least IspG. The polypeptide is Iron-sulfur cluster insertion protein ErpA (Enterobacter sp. (strain 638)).